A 107-amino-acid chain; its full sequence is UPF0060 membrane protein A1S_1909 (107 aa).

The next 4 membrane-spanning stretches (helical) occupy residues 2-22 (FGLFIITAIAEILGCYFPYLI), 28-48 (SAWLWLPTALSLAVFVWLLTL), 56-76 (IYAAYGGIYIFTALMWLRFVD), and 85-105 (ILGGVIVLCGAGLIILQPQGL).

It belongs to the UPF0060 family.

Its subcellular location is the cell inner membrane. This Acinetobacter baumannii (strain ATCC 17978 / DSM 105126 / CIP 53.77 / LMG 1025 / NCDC KC755 / 5377) protein is UPF0060 membrane protein A1S_1909.